The chain runs to 60 residues: uncharacterized protein (60 aa).

This is an uncharacterized protein from Emericella nidulans (strain FGSC A4 / ATCC 38163 / CBS 112.46 / NRRL 194 / M139) (Aspergillus nidulans).